The primary structure comprises 757 residues: Glutathione biosynthesis bifunctional protein GshAB (757 aa).

The glutamate--cysteine ligase stretch occupies residues 1–337 (MKIQHIIHEN…LGKARLAEVA (337 aa)). The 260-residue stretch at 494–753 (KKVLQKAGFN…LTQNVIKMLF (260 aa)) folds into the ATP-grasp domain. Residue 521–580 (ALFENRAVVIKPKSTNYGLGITIFQQGVQNREDFAKALEIAFREDKEVMVEDYLVGTEYR) coordinates ATP. Residues Asp-702, Glu-723, and Asn-725 each contribute to the Mg(2+) site. Asp-702, Glu-723, and Asn-725 together coordinate Mn(2+).

The protein in the N-terminal section; belongs to the glutamate--cysteine ligase type 1 family. Type 2 subfamily. Monomer. The cofactor is Mg(2+). It depends on Mn(2+) as a cofactor.

It catalyses the reaction L-cysteine + L-glutamate + ATP = gamma-L-glutamyl-L-cysteine + ADP + phosphate + H(+). The enzyme catalyses gamma-L-glutamyl-L-cysteine + glycine + ATP = glutathione + ADP + phosphate + H(+). Its pathway is sulfur metabolism; glutathione biosynthesis; glutathione from L-cysteine and L-glutamate: step 1/2. The protein operates within sulfur metabolism; glutathione biosynthesis; glutathione from L-cysteine and L-glutamate: step 2/2. In terms of biological role, synthesizes glutathione from L-glutamate and L-cysteine via gamma-L-glutamyl-L-cysteine. The polypeptide is Glutathione biosynthesis bifunctional protein GshAB (Pasteurella multocida (strain Pm70)).